Reading from the N-terminus, the 721-residue chain is Teichoic acid poly(glycerol phosphate) polymerase (721 aa).

CDP-glycerol is bound by residues 443–447, Arg-511, 545–546, 582–584, 624–625, and Asp-629; these read WHGTP, PT, RMH, and SS.

This sequence belongs to the CDP-glycerol glycerophosphotransferase family.

The protein localises to the cell membrane. The enzyme catalyses 4-O-[(2R)-glycerylphospho]-N-acetyl-beta-D-mannosaminyl-(1-&gt;4)-N-acetyl-alpha-D-glucosaminyl di-trans,octa-cis-undecaprenyl diphosphate + n CDP-glycerol = 4-O-{[(2R)-1-glycerylphospho](n)-(2R)-1-glycerylphospho}-N-acetyl-beta-D-mannosaminyl-(1-&gt;4)-N-acetyl-alpha-D-glucosaminyl undecaprenyl diphosphate + n CMP + n H(+). It participates in cell wall biogenesis; poly(glycerol phosphate) teichoic acid biosynthesis. Its function is as follows. Responsible for the polymerization of the main chain of the major teichoic acid by sequential transfer of glycerol phosphate units from CDP-glycerol to the disaccharide linkage unit. Synthesizes polymers of approximately 35 glycerol phosphate units in length. This Staphylococcus epidermidis (strain ATCC 35984 / DSM 28319 / BCRC 17069 / CCUG 31568 / BM 3577 / RP62A) protein is Teichoic acid poly(glycerol phosphate) polymerase.